Here is a 558-residue protein sequence, read N- to C-terminus: ATP-dependent RNA helicase ROK1 (558 aa).

The interval proline 26–threonine 91 is disordered. Basic and acidic residues-rich tracts occupy residues glutamate 34–histidine 53 and aspartate 64–aspartate 81. A Q motif motif is present at residues aspartate 120 to cysteine 148. The 179-residue stretch at leucine 151–valine 329 folds into the Helicase ATP-binding domain. Alanine 164–threonine 171 contributes to the ATP binding site. The DEAD box motif lies at aspartate 276–aspartate 279. Positions threonine 340 to threonine 504 constitute a Helicase C-terminal domain. A disordered region spans residues asparagine 509–glutamine 558. Positions arginine 538–glutamine 558 are enriched in basic and acidic residues.

This sequence belongs to the DEAD box helicase family. DDX52/ROK1 subfamily. As to quaternary structure, interacts with the U3 snoRNA and is associated with the 90S and 40S pre-ribosomes.

Its subcellular location is the nucleus. It is found in the nucleolus. The catalysed reaction is ATP + H2O = ADP + phosphate + H(+). Functionally, ATP-dependent RNA helicase involved in 40S ribosomal subunit biogenesis. Required for the processing and cleavage of 35S pre-rRNA at sites A0, A1, and A2, leading to mature 18S rRNA. The polypeptide is ATP-dependent RNA helicase ROK1 (ROK1) (Scheffersomyces stipitis (strain ATCC 58785 / CBS 6054 / NBRC 10063 / NRRL Y-11545) (Yeast)).